Reading from the N-terminus, the 226-residue chain is uncharacterized protein (226 aa).

This is an uncharacterized protein from Caenorhabditis elegans.